The following is a 384-amino-acid chain: Zinc finger CCCH domain-containing protein 12 (384 aa).

Disordered stretches follow at residues 1-32 and 46-81; these read MSHH…NLGD and WAMN…SAAS. Residues 50–60 are compositionally biased toward polar residues; the sequence is PDNTSGDNNGP. Residues 70–81 show a composition bias toward low complexity; sequence SSSSATTTSAAS. C3H1-type zinc fingers lie at residues 91-118 and 172-200; these read FFKT…HTVE and SFKG…HDEA. The tract at residues 211 to 231 is disordered; that stretch reads LGPGGYGSGGGGGSGGGSVGG. Residues 212-231 are compositionally biased toward gly residues; sequence GPGGYGSGGGGGSGGGSVGG. The C3H1-type 3 zinc-finger motif lies at 260–288; it reads NWKTRICNKWEITGYCPFGAKCHFAHGAA. Positions 299–335 are disordered; it reads EEEGKDGVSPNPDTKQTVQNPKGLSDTTTLLSPGVPH. The span at 309–329 shows a compositional bias: polar residues; that stretch reads NPDTKQTVQNPKGLSDTTTLL.

The protein is Zinc finger CCCH domain-containing protein 12 of Arabidopsis thaliana (Mouse-ear cress).